We begin with the raw amino-acid sequence, 464 residues long: Asparagine--tRNA ligase (464 aa).

The protein belongs to the class-II aminoacyl-tRNA synthetase family. Homodimer.

Its subcellular location is the cytoplasm. It carries out the reaction tRNA(Asn) + L-asparagine + ATP = L-asparaginyl-tRNA(Asn) + AMP + diphosphate + H(+). This chain is Asparagine--tRNA ligase, found in Cytophaga hutchinsonii (strain ATCC 33406 / DSM 1761 / CIP 103989 / NBRC 15051 / NCIMB 9469 / D465).